We begin with the raw amino-acid sequence, 180 residues long: ADP-ribosylation factor 4 (180 aa).

Gly-2 carries the N-myristoyl glycine lipid modification. GTP contacts are provided by residues 24–31, 67–71, and 126–129; these read GLDAAGKT, DVGGQ, and NKQD. Ser-147 bears the Phosphoserine mark.

It belongs to the small GTPase superfamily. Arf family. Forms a complex containing RAB11A, ASAP1, RAB3IP, RAP11FIP3 and ARF4; the complex promotes preciliary trafficking; the complex binds to RHO in photoreceptor cells and promotes RHO ciliary transport.

It localises to the golgi apparatus. Its subcellular location is the membrane. GTP-binding protein that functions as an allosteric activator of the cholera toxin catalytic subunit, an ADP-ribosyltransferase. Involved in protein trafficking; may modulate vesicle budding and uncoating within the Golgi apparatus. Part of the ciliary targeting complex containing Rab11, ASAP1, Rabin8/RAB3IP, RAB11FIP3 and ARF4, which direct preciliary vesicle trafficking to mother centriole and ciliogenesis initiation. The chain is ADP-ribosylation factor 4 (Arf4) from Mus musculus (Mouse).